We begin with the raw amino-acid sequence, 149 residues long: Large ribosomal subunit protein bL9 (149 aa).

The protein belongs to the bacterial ribosomal protein bL9 family.

In terms of biological role, binds to the 23S rRNA. In Leptospira interrogans serogroup Icterohaemorrhagiae serovar copenhageni (strain Fiocruz L1-130), this protein is Large ribosomal subunit protein bL9.